The following is a 441-amino-acid chain: Ribulose bisphosphate carboxylase large chain (441 aa).

Lysine 5 carries the N6,N6,N6-trimethyllysine modification. Substrate is bound by residues asparagine 114 and threonine 164. Lysine 166 functions as the Proton acceptor in the catalytic mechanism. Residue lysine 168 coordinates substrate. 3 residues coordinate Mg(2+): lysine 192, aspartate 194, and glutamate 195. Lysine 192 is modified (N6-carboxylysine). Catalysis depends on histidine 285, which acts as the Proton acceptor. 3 residues coordinate substrate: arginine 286, histidine 318, and serine 370.

Belongs to the RuBisCO large chain family. Type I subfamily. Heterohexadecamer of 8 large chains and 8 small chains; disulfide-linked. The disulfide link is formed within the large subunit homodimers. It depends on Mg(2+) as a cofactor. In terms of processing, the disulfide bond which can form in the large chain dimeric partners within the hexadecamer appears to be associated with oxidative stress and protein turnover.

Its subcellular location is the plastid. It is found in the chloroplast. The catalysed reaction is 2 (2R)-3-phosphoglycerate + 2 H(+) = D-ribulose 1,5-bisphosphate + CO2 + H2O. The enzyme catalyses D-ribulose 1,5-bisphosphate + O2 = 2-phosphoglycolate + (2R)-3-phosphoglycerate + 2 H(+). Its function is as follows. RuBisCO catalyzes two reactions: the carboxylation of D-ribulose 1,5-bisphosphate, the primary event in carbon dioxide fixation, as well as the oxidative fragmentation of the pentose substrate in the photorespiration process. Both reactions occur simultaneously and in competition at the same active site. In Drosera petiolaris (Woolly sundew), this protein is Ribulose bisphosphate carboxylase large chain.